The chain runs to 363 residues: Anthranilate phosphoribosyltransferase (363 aa).

5-phospho-alpha-D-ribose 1-diphosphate contacts are provided by residues Gly85, 88-89, Thr93, 95-98, 113-121, and Ala125; these read GD, NVST, and KHGNRALSS. Residue Gly85 participates in anthranilate binding. A Mg(2+)-binding site is contributed by Ser97. Residue Asn116 participates in anthranilate binding. Arg171 serves as a coordination point for anthranilate. Mg(2+) is bound by residues Asp233 and Glu234.

The protein belongs to the anthranilate phosphoribosyltransferase family. As to quaternary structure, homodimer. Mg(2+) is required as a cofactor.

The enzyme catalyses N-(5-phospho-beta-D-ribosyl)anthranilate + diphosphate = 5-phospho-alpha-D-ribose 1-diphosphate + anthranilate. The protein operates within amino-acid biosynthesis; L-tryptophan biosynthesis; L-tryptophan from chorismate: step 2/5. Functionally, catalyzes the transfer of the phosphoribosyl group of 5-phosphorylribose-1-pyrophosphate (PRPP) to anthranilate to yield N-(5'-phosphoribosyl)-anthranilate (PRA). The polypeptide is Anthranilate phosphoribosyltransferase (Gluconobacter oxydans (strain 621H) (Gluconobacter suboxydans)).